The sequence spans 335 residues: Ketol-acid reductoisomerase (NADP(+)) 2 (335 aa).

Residues 1–180 (MKTYYEKDAN…GCTRAGVIET (180 aa)) enclose the KARI N-terminal Rossmann domain. Residues 24-27 (YGSQ), arginine 47, serine 51, and 81-84 (DEQQ) contribute to the NADP(+) site. Residue histidine 106 is part of the active site. Glycine 132 contacts NADP(+). Residues 181–326 (TFQEETETDL…AELREMMSWI (146 aa)) enclose the KARI C-terminal knotted domain. Positions 189, 193, 225, and 229 each coordinate Mg(2+). Substrate is bound at residue serine 250.

The protein belongs to the ketol-acid reductoisomerase family. Mg(2+) is required as a cofactor.

The catalysed reaction is (2R)-2,3-dihydroxy-3-methylbutanoate + NADP(+) = (2S)-2-acetolactate + NADPH + H(+). It carries out the reaction (2R,3R)-2,3-dihydroxy-3-methylpentanoate + NADP(+) = (S)-2-ethyl-2-hydroxy-3-oxobutanoate + NADPH + H(+). It functions in the pathway amino-acid biosynthesis; L-isoleucine biosynthesis; L-isoleucine from 2-oxobutanoate: step 2/4. It participates in amino-acid biosynthesis; L-valine biosynthesis; L-valine from pyruvate: step 2/4. Its function is as follows. Involved in the biosynthesis of branched-chain amino acids (BCAA). Catalyzes an alkyl-migration followed by a ketol-acid reduction of (S)-2-acetolactate (S2AL) to yield (R)-2,3-dihydroxy-isovalerate. In the isomerase reaction, S2AL is rearranged via a Mg-dependent methyl migration to produce 3-hydroxy-3-methyl-2-ketobutyrate (HMKB). In the reductase reaction, this 2-ketoacid undergoes a metal-dependent reduction by NADPH to yield (R)-2,3-dihydroxy-isovalerate. This chain is Ketol-acid reductoisomerase (NADP(+)) 2, found in Bacillus cereus (strain ATCC 10987 / NRS 248).